A 327-amino-acid chain; its full sequence is Phenylalanine--tRNA ligase alpha subunit (327 aa).

A Mg(2+)-binding site is contributed by E252.

This sequence belongs to the class-II aminoacyl-tRNA synthetase family. Phe-tRNA synthetase alpha subunit type 1 subfamily. Tetramer of two alpha and two beta subunits. It depends on Mg(2+) as a cofactor.

The protein localises to the cytoplasm. It catalyses the reaction tRNA(Phe) + L-phenylalanine + ATP = L-phenylalanyl-tRNA(Phe) + AMP + diphosphate + H(+). The sequence is that of Phenylalanine--tRNA ligase alpha subunit from Edwardsiella ictaluri (strain 93-146).